Consider the following 391-residue polypeptide: Carbamoyl phosphate synthase small chain (391 aa).

A CPSase region spans residues Met-1–Glu-202. Residues Ser-47, Gly-254, and Gly-256 each contribute to the L-glutamine site. Residues Lys-206–Ala-391 enclose the Glutamine amidotransferase type-1 domain. The active-site Nucleophile is the Cys-282. 5 residues coordinate L-glutamine: Leu-283, Gln-286, Asn-324, Gly-326, and Phe-327. Catalysis depends on residues His-366 and Glu-368.

It belongs to the CarA family. As to quaternary structure, composed of two chains; the small (or glutamine) chain promotes the hydrolysis of glutamine to ammonia, which is used by the large (or ammonia) chain to synthesize carbamoyl phosphate. Tetramer of heterodimers (alpha,beta)4.

The catalysed reaction is hydrogencarbonate + L-glutamine + 2 ATP + H2O = carbamoyl phosphate + L-glutamate + 2 ADP + phosphate + 2 H(+). The enzyme catalyses L-glutamine + H2O = L-glutamate + NH4(+). It participates in amino-acid biosynthesis; L-arginine biosynthesis; carbamoyl phosphate from bicarbonate: step 1/1. The protein operates within pyrimidine metabolism; UMP biosynthesis via de novo pathway; (S)-dihydroorotate from bicarbonate: step 1/3. Small subunit of the glutamine-dependent carbamoyl phosphate synthetase (CPSase). CPSase catalyzes the formation of carbamoyl phosphate from the ammonia moiety of glutamine, carbonate, and phosphate donated by ATP, constituting the first step of 2 biosynthetic pathways, one leading to arginine and/or urea and the other to pyrimidine nucleotides. The small subunit (glutamine amidotransferase) binds and cleaves glutamine to supply the large subunit with the substrate ammonia. This chain is Carbamoyl phosphate synthase small chain, found in Xanthomonas axonopodis pv. citri (strain 306).